A 202-amino-acid polypeptide reads, in one-letter code: Transmembrane protein 223 (202 aa).

Over 1–43 (MAAPGRRWSVLLFRALQSLSARRALHDTAPPRDVLLFEHERGR) the chain is Mitochondrial matrix. The chain crosses the membrane as a helical span at residues 44–64 (FFAVLGLFCAGQGVFWASLAI). Over 65–97 (ASLARPPTPVRPTDAKTPDHGGLDLRSTLWRYG) the chain is Mitochondrial intermembrane. Residues 98-118 (LAVGCGAIGSLVLGAGLLFSL) traverse the membrane as a helical segment. Topologically, residues 119–202 (RSVRSVMLRA…DNTVGAYRSL (84 aa)) are mitochondrial matrix.

This sequence belongs to the TMEM223 family. Associates with the mitochondrial ribosome.

The protein localises to the mitochondrion inner membrane. Mitochondrial ribosome-associated protein involved in the first steps of cytochrome c oxidase complex (complex IV) biogenesis. Stimulates the translation of MT-CO1 mRNA and is a constituent of early MT-CO1 assembly intermediates. The sequence is that of Transmembrane protein 223 from Bos taurus (Bovine).